The chain runs to 385 residues: MRAVHFGAGNIGRGFIGSLLAASGYDVVFVDVNEQIVRLLKERGEYRVIIAGERQEEQWVRGVSALNSQTERDDVIEAIASADLVTTAVGPHILPVIAPVIAAGLERRFTVHQKPLHVIACENMIGGTETLKQHVVTHLSEAGRQLVEECVGFLNCAVDRIVPNQTNDDPLAVTVEPFFEWAIETKNTIGAVPPIQGAHFVADLGPYIERKLFTVNTGHALAAYLGYQKQYRTVQEAMKDSGIRESVEQALRESGAVLVKKHGWDEQEHRSYIETTIGRFTNPSLSDDIVRVARSPIRKLGPNDRLVAPAVQYYTLFERVPSGLVKGIAALLLFDETGDAEATALQQTIEQSGVEGALVQYAGLDNSHPLVVAVKEEYKKMQKEQ.

Position 3-14 (3-14 (AVHFGAGNIGRG)) interacts with NAD(+).

It belongs to the mannitol dehydrogenase family.

It carries out the reaction D-mannitol 1-phosphate + NAD(+) = beta-D-fructose 6-phosphate + NADH + H(+). The sequence is that of Mannitol-1-phosphate 5-dehydrogenase from Geobacillus thermodenitrificans (strain NG80-2).